The chain runs to 851 residues: Alanine--tRNA ligase (851 aa).

Residues His-535, His-539, Cys-637, and His-641 each contribute to the Zn(2+) site.

It belongs to the class-II aminoacyl-tRNA synthetase family. Zn(2+) serves as cofactor.

The protein localises to the cytoplasm. The catalysed reaction is tRNA(Ala) + L-alanine + ATP = L-alanyl-tRNA(Ala) + AMP + diphosphate. In terms of biological role, catalyzes the attachment of alanine to tRNA(Ala) in a two-step reaction: alanine is first activated by ATP to form Ala-AMP and then transferred to the acceptor end of tRNA(Ala). Also edits incorrectly charged Ser-tRNA(Ala) and Gly-tRNA(Ala) via its editing domain. The protein is Alanine--tRNA ligase of Acholeplasma laidlawii (strain PG-8A).